Consider the following 278-residue polypeptide: MVPGTGGGRDCLTLVVATALTQLLWLPGCCGSHIVGGHEVKPHARPYMASVNFEGHHHCGGFLFHAHWVLSAAHCFSDRDPSTGLVVLGAHALLTPEPTQQVFGIAAVVSHPDFEPTTQANDICLLRLNGSAVLGPAVRLLRLPRRGAKPPVAGTRCRVSGWGSVSDFEEPPPGLMEVEVRILDLSVCNSSWQGQLSPAMLCTHSGDRRRRGFCSADSGGPLVCGNRAHGLVSFSGLWCGDPKTPDVYTQVSAFVSWIWDVVRASPTPGSMGCSLRAV.

A signal peptide spans 1-31 (MVPGTGGGRDCLTLVVATALTQLLWLPGCCG). In terms of domain architecture, Peptidase S1 spans 34–263 (IVGGHEVKPH…FVSWIWDVVR (230 aa)). C59 and C75 are oxidised to a cystine. Residues H74 and D122 each act as charge relay system in the active site. N-linked (GlcNAc...) asparagine glycosylation is present at N129. Intrachain disulfides connect C157–C224, C188–C202, and C214–C239. S218 acts as the Charge relay system in catalysis.

It belongs to the peptidase S1 family. In terms of processing, after cleavage of the signal peptide, the N-terminus is probably further processed by CTSC. Processing by CTSC is probably required for accumulation in cytoplasmic granules; in the absence of CTSC the protein does not accumulate. Post-translationally, N-glycosylated.

Its subcellular location is the cytoplasmic granule lumen. It localises to the secreted. Serine protease that cleaves preferentially after Arg residues. Can also cleave after citrulline (deimidated arginine) and methylarginine residues. In Rattus norvegicus (Rat), this protein is Serine protease 57 (Prss57).